The primary structure comprises 109 residues: Probable glutaredoxin slr1562 (109 aa).

One can recognise a Glutaredoxin domain in the interval 11-109 (LSGRQADGIK…PLLATPPNPA (99 aa)). Cys31 and Cys34 are disulfide-bonded.

Belongs to the glutaredoxin family.

Functionally, has a glutathione-disulfide oxidoreductase activity in the presence of NADPH and glutathione reductase. Reduces low molecular weight disulfides and proteins. In Synechocystis sp. (strain ATCC 27184 / PCC 6803 / Kazusa), this protein is Probable glutaredoxin slr1562.